The sequence spans 520 residues: Ribonuclease Y (520 aa).

The helical transmembrane segment at 4–24 (TVWILISILLATVGAVVGFFV) threads the bilayer. Residues 210-273 (TVSVVNLPND…ETARIALDKL (64 aa)) form the KH domain. The HD domain occupies 336–429 (VLKHSMEVAY…VAAADALSAA (94 aa)).

It belongs to the RNase Y family.

It localises to the cell membrane. In terms of biological role, endoribonuclease that initiates mRNA decay. The sequence is that of Ribonuclease Y from Bacillus cereus (strain ZK / E33L).